The chain runs to 201 residues: Pyridoxal 5'-phosphate synthase subunit PdxT (201 aa).

50 to 52 is an L-glutamine binding site; sequence GES. Cys-82 (nucleophile) is an active-site residue. L-glutamine is bound by residues Arg-115 and 143-144; that span reads IR. Active-site charge relay system residues include His-179 and Glu-181.

This sequence belongs to the glutaminase PdxT/SNO family. In the presence of PdxS, forms a dodecamer of heterodimers. Only shows activity in the heterodimer.

It carries out the reaction aldehydo-D-ribose 5-phosphate + D-glyceraldehyde 3-phosphate + L-glutamine = pyridoxal 5'-phosphate + L-glutamate + phosphate + 3 H2O + H(+). The enzyme catalyses L-glutamine + H2O = L-glutamate + NH4(+). It functions in the pathway cofactor biosynthesis; pyridoxal 5'-phosphate biosynthesis. Its function is as follows. Catalyzes the hydrolysis of glutamine to glutamate and ammonia as part of the biosynthesis of pyridoxal 5'-phosphate. The resulting ammonia molecule is channeled to the active site of PdxS. This is Pyridoxal 5'-phosphate synthase subunit PdxT from Deinococcus geothermalis (strain DSM 11300 / CIP 105573 / AG-3a).